We begin with the raw amino-acid sequence, 618 residues long: Leucine aminopeptidase 2 (618 aa).

Residues 140–142 and 272–277 contribute to the a peptide site; these read QCQ and PYGGME. Zn(2+) is bound at residue H301. E302 acts as the Proton acceptor in catalysis. Residues H305 and E324 each contribute to the Zn(2+) site. Y389 acts as the Proton donor in catalysis.

The protein belongs to the peptidase M1 family. The cofactor is Zn(2+).

Its subcellular location is the cytoplasm. It localises to the nucleus. The enzyme catalyses an epoxide + H2O = an ethanediol. Aminopeptidase that preferentially cleaves di- and tripeptides. Also has low epoxide hydrolase activity (in vitro). Can hydrolyze the epoxide leukotriene LTA(4) but it forms preferentially 5,6-dihydroxy-7,9,11,14-eicosatetraenoic acid rather than the cytokine leukotriene B(4) as the product compared to the homologous mammalian enzyme (in vitro). The protein is Leucine aminopeptidase 2 of Emericella nidulans (strain FGSC A4 / ATCC 38163 / CBS 112.46 / NRRL 194 / M139) (Aspergillus nidulans).